A 660-amino-acid chain; its full sequence is Arginine--tRNA ligase, cytoplasmic (660 aa).

N-acetylmethionine is present on M1. The interval 1 to 72 (MDGLVAQCSA…QEERRKPTKN (72 aa)) is could be involved in the assembly of the multisynthetase complex. Residues 200 to 202 (SPN), H211, Y384, D388, and Q412 contribute to the L-arginine site. Residues 201 to 212 (PNIAKEMHVGHL) carry the 'HIGH' region motif. Positions 529-543 (NTAAYLLYAFTRIRS) are interaction with tRNA.

Belongs to the class-I aminoacyl-tRNA synthetase family. In terms of assembly, interacts (via N-terminus) with AIMP1 (via N-terminus); this stimulates its catalytic activity. Interacts (via N-terminus) with LARS2 (via C-terminus). Monomer. Part of a multisubunit complex that groups tRNA ligases for Arg (RARS1), Asp (DARS1), Gln (QARS1), Ile (IARS1), Leu (LARS1), Lys (KARS1), Met (MARS1) the bifunctional ligase for Glu and Pro (EPRS1) and the auxiliary subunits AIMP1/p43, AIMP2/p38 and EEF1E1/p18. Interacts with QARS1. Part of a complex composed of RARS1, QARS1 and AIMP1.

The protein localises to the cytoplasm. The protein resides in the cytosol. It carries out the reaction tRNA(Arg) + L-arginine + ATP = L-arginyl-tRNA(Arg) + AMP + diphosphate. In terms of biological role, forms part of a macromolecular complex that catalyzes the attachment of specific amino acids to cognate tRNAs during protein synthesis. Modulates the secretion of AIMP1 and may be involved in generation of the inflammatory cytokine EMAP2 from AIMP1. In Mus musculus (Mouse), this protein is Arginine--tRNA ligase, cytoplasmic (Rars1).